The sequence spans 149 residues: Nucleoside diphosphate kinase (149 aa).

K9, F57, R85, T91, R102, and N112 together coordinate ATP. Catalysis depends on H115, which acts as the Pros-phosphohistidine intermediate.

This sequence belongs to the NDK family. As to quaternary structure, homotetramer. Requires Mg(2+) as cofactor.

The protein resides in the cytoplasm. The catalysed reaction is a 2'-deoxyribonucleoside 5'-diphosphate + ATP = a 2'-deoxyribonucleoside 5'-triphosphate + ADP. It carries out the reaction a ribonucleoside 5'-diphosphate + ATP = a ribonucleoside 5'-triphosphate + ADP. Its function is as follows. Major role in the synthesis of nucleoside triphosphates other than ATP. The ATP gamma phosphate is transferred to the NDP beta phosphate via a ping-pong mechanism, using a phosphorylated active-site intermediate. This chain is Nucleoside diphosphate kinase, found in Nostoc sp. (strain PCC 7120 / SAG 25.82 / UTEX 2576).